The following is a 165-amino-acid chain: Large ribosomal subunit protein mL49 (165 aa).

Over residues 42–75 (TTATTTTPLQQQQQQQPTTQPTTPIQTQTGAAPT) the composition is skewed to low complexity. The disordered stretch occupies residues 42-81 (TTATTTTPLQQQQQQQPTTQPTTPIQTQTGAAPTESTKPV).

The protein belongs to the mitochondrion-specific ribosomal protein mL49 family. Component of the mitochondrial large ribosomal subunit (mt-LSU). Mature N.crassa 74S mitochondrial ribosomes consist of a small (37S) and a large (54S) subunit. The 37S small subunit contains a 16S ribosomal RNA (16S mt-rRNA) and 32 different proteins. The 54S large subunit contains a 23S rRNA (23S mt-rRNA) and 42 different proteins.

It localises to the mitochondrion. In terms of biological role, component of the mitochondrial ribosome (mitoribosome), a dedicated translation machinery responsible for the synthesis of mitochondrial genome-encoded proteins, including at least some of the essential transmembrane subunits of the mitochondrial respiratory chain. The mitoribosomes are attached to the mitochondrial inner membrane and translation products are cotranslationally integrated into the membrane. In Neurospora crassa (strain ATCC 24698 / 74-OR23-1A / CBS 708.71 / DSM 1257 / FGSC 987), this protein is Large ribosomal subunit protein mL49 (img2).